The sequence spans 224 residues: Heme response regulator HssR (224 aa).

In terms of domain architecture, Response regulatory spans glutamine 3 to leucine 116. Aspartate 52 is modified (4-aspartylphosphate). The ompR/PhoB-type DNA-binding region spans asparagine 124–asparagine 222.

Post-translationally, phosphorylated by HssS.

The protein resides in the cytoplasm. Member of the two-component regulatory system HssS/HssR involved in intracellular heme homeostasis and tempering of staphylococcal virulence. Phosphorylated HssR binds to a direct repeat sequence within hrtAB promoter and activates the expression of hrtAB, an efflux pump, in response to extracellular heme, hemin, hemoglobin or blood. This Staphylococcus aureus (strain MRSA252) protein is Heme response regulator HssR (hssR).